The following is a 276-amino-acid chain: S-adenosylmethionine decarboxylase proenzyme (276 aa).

Catalysis depends on serine 124, which acts as the Schiff-base intermediate with substrate; via pyruvic acid. Residue serine 124 is modified to Pyruvic acid (Ser); by autocatalysis. Histidine 129 acts as the Proton acceptor; for processing activity in catalysis. Cysteine 152 (proton donor; for catalytic activity) is an active-site residue.

This sequence belongs to the prokaryotic AdoMetDC family. Type 2 subfamily. As to quaternary structure, heterooctamer of four alpha and four beta chains arranged as a tetramer of alpha/beta heterodimers. Requires pyruvate as cofactor. In terms of processing, is synthesized initially as an inactive proenzyme. Formation of the active enzyme involves a self-maturation process in which the active site pyruvoyl group is generated from an internal serine residue via an autocatalytic post-translational modification. Two non-identical subunits are generated from the proenzyme in this reaction, and the pyruvate is formed at the N-terminus of the alpha chain, which is derived from the carboxyl end of the proenzyme. The post-translation cleavage follows an unusual pathway, termed non-hydrolytic serinolysis, in which the side chain hydroxyl group of the serine supplies its oxygen atom to form the C-terminus of the beta chain, while the remainder of the serine residue undergoes an oxidative deamination to produce ammonia and the pyruvoyl group blocking the N-terminus of the alpha chain.

It catalyses the reaction S-adenosyl-L-methionine + H(+) = S-adenosyl 3-(methylsulfanyl)propylamine + CO2. Its pathway is amine and polyamine biosynthesis; S-adenosylmethioninamine biosynthesis; S-adenosylmethioninamine from S-adenosyl-L-methionine: step 1/1. In terms of biological role, catalyzes the decarboxylation of S-adenosylmethionine to S-adenosylmethioninamine (dcAdoMet), the propylamine donor required for the synthesis of the polyamines spermine and spermidine from the diamine putrescine. The chain is S-adenosylmethionine decarboxylase proenzyme from Desulfitobacterium hafniense (strain DSM 10664 / DCB-2).